The following is a 482-amino-acid chain: Glutamate--tRNA ligase (482 aa).

Positions 9–19 (PSPTGYLHIGG) match the 'HIGH' region motif. Residues 252 to 256 (KLSKR) carry the 'KMSKS' region motif. Lys-255 is an ATP binding site.

The protein belongs to the class-I aminoacyl-tRNA synthetase family. Glutamate--tRNA ligase type 1 subfamily. Monomer.

The protein resides in the cytoplasm. It catalyses the reaction tRNA(Glu) + L-glutamate + ATP = L-glutamyl-tRNA(Glu) + AMP + diphosphate. Functionally, catalyzes the attachment of glutamate to tRNA(Glu) in a two-step reaction: glutamate is first activated by ATP to form Glu-AMP and then transferred to the acceptor end of tRNA(Glu). In Ureaplasma urealyticum serovar 10 (strain ATCC 33699 / Western), this protein is Glutamate--tRNA ligase.